A 256-amino-acid chain; its full sequence is Homeobox-leucine zipper protein HOX18 (256 aa).

The disordered stretch occupies residues 52–116 (YDHGRDEEQA…GGGGGGTRKK (65 aa)). A compositionally biased stretch (gly residues) spans 102–112 (DGGSGGGGGGG). Residues 112–171 (GTRKKLQLTKEQSTLLEDSFRVHNILSHAQKHELARQLKLKPRQVEVWFQNRRARTKLKQ) constitute a DNA-binding region (homeobox). The segment at 170-214 (KQTEVDCEFLKRCCESLTEENKQLKHELMELRRLASPAAAAAGSQ) is leucine-zipper.

Belongs to the HD-ZIP homeobox family. Class II subfamily. Expressed in roots, leaf sheaths and blades and panicles.

Its subcellular location is the nucleus. In terms of biological role, probable transcription factor. This Oryza sativa subsp. japonica (Rice) protein is Homeobox-leucine zipper protein HOX18 (HOX18).